The primary structure comprises 111 residues: Iron-sulfur cluster assembly protein CyaY (111 aa).

It belongs to the frataxin family.

Involved in iron-sulfur (Fe-S) cluster assembly. May act as a regulator of Fe-S biogenesis. This is Iron-sulfur cluster assembly protein CyaY from Cupriavidus taiwanensis (strain DSM 17343 / BCRC 17206 / CCUG 44338 / CIP 107171 / LMG 19424 / R1) (Ralstonia taiwanensis (strain LMG 19424)).